We begin with the raw amino-acid sequence, 227 residues long: Isoprenyl transferase (227 aa).

Asp13 is an active-site residue. Asp13 contacts Mg(2+). Substrate is bound by residues 14–17 (GNGR), Trp18, Arg26, His30, and 58–60 (STE). The active-site Proton acceptor is Asn61. Residues Trp62, Arg64, Arg175, and 181-183 (RLS) contribute to the substrate site. Glu194 provides a ligand contact to Mg(2+).

It belongs to the UPP synthase family. In terms of assembly, homodimer. Mg(2+) serves as cofactor.

Functionally, catalyzes the condensation of isopentenyl diphosphate (IPP) with allylic pyrophosphates generating different type of terpenoids. In Treponema denticola (strain ATCC 35405 / DSM 14222 / CIP 103919 / JCM 8153 / KCTC 15104), this protein is Isoprenyl transferase.